The primary structure comprises 517 residues: G-protein coupled receptor Mth (517 aa).

A signal peptide spans 1–27; the sequence is MKLFWVKRLLRISTVVVTLLLLQRTNA. Residues 28-221 are Extracellular-facing; the sequence is AIPDCDYYDT…CLISPSRMGQ (194 aa). 5 disulfide bridges follow: Cys32–Cys86, Cys88–Cys93, Cys97–Cys191, Cys98–Cys109, and Cys153–Cys212. Residues Asn48 and Asn61 are each glycosylated (N-linked (GlcNAc...) asparagine). N-linked (GlcNAc...) asparagine glycans are attached at residues Asn126, Asn173, and Asn201. The helical transmembrane segment at 222-242 threads the bilayer; that stretch reads TVVMITSLVCMVLTITVYLFV. Residues 243–251 are Cytoplasmic-facing; that stretch reads KKLQNLHGK. The chain crosses the membrane as a helical span at residues 252–272; it reads CFMCYMVCLFMAYLLLLLNLW. Residues 273 to 279 lie on the Extracellular side of the membrane; that stretch reads QMSQNFC. A helical transmembrane segment spans residues 280–300; it reads ITAGFLGYFFVMAAFLWLSVI. Over 301 to 323 the chain is Cytoplasmic; it reads SLHLWNTFSGSAHNANRFLSEHR. Residues 324 to 344 traverse the membrane as a helical segment; the sequence is FLAYNTYAWGMAVVLTGITYL. Over 345 to 373 the chain is Extracellular; sequence ADKVVENEDWNPRMGFGGHCWICTQSWSA. Residues 374–394 form a helical membrane-spanning segment; it reads MLYFYGPMVFLIAFNITMFIL. Topologically, residues 395-427 are cytoplasmic; the sequence is TANRIIGVKKDIQKFAHRQERKQKLNSDKQTYT. A helical membrane pass occupies residues 428-448; it reads FFLRLFIIMGLTWSLEIGSYI. The Extracellular portion of the chain corresponds to 449-457; the sequence is SQFNQTWSN. Asn452 carries an N-linked (GlcNAc...) asparagine glycan. A helical transmembrane segment spans residues 458-478; the sequence is VFLVADYLNWSQGIIIFILFV. Residues 479–517 are Cytoplasmic-facing; that stretch reads LKRSTLRLLMESIRGEGEEVNDSEEEISLENTKYDRNVL.

Belongs to the G-protein coupled receptor 2 family. Mth subfamily. Homodimer.

Its subcellular location is the cell membrane. In terms of biological role, involved in biological aging and stress response. Essential for adult survival. The sequence is that of G-protein coupled receptor Mth (mth) from Drosophila yakuba (Fruit fly).